The sequence spans 160 residues: tRNA (cytidine(34)-2'-O)-methyltransferase (160 aa).

Positions 78, 100, 120, and 128 each coordinate S-adenosyl-L-methionine.

This sequence belongs to the class IV-like SAM-binding methyltransferase superfamily. RNA methyltransferase TrmH family. TrmL subfamily. As to quaternary structure, homodimer.

Its subcellular location is the cytoplasm. The catalysed reaction is cytidine(34) in tRNA + S-adenosyl-L-methionine = 2'-O-methylcytidine(34) in tRNA + S-adenosyl-L-homocysteine + H(+). The enzyme catalyses 5-carboxymethylaminomethyluridine(34) in tRNA(Leu) + S-adenosyl-L-methionine = 5-carboxymethylaminomethyl-2'-O-methyluridine(34) in tRNA(Leu) + S-adenosyl-L-homocysteine + H(+). Methylates the ribose at the nucleotide 34 wobble position in the two leucyl isoacceptors tRNA(Leu)(CmAA) and tRNA(Leu)(cmnm5UmAA). Catalyzes the methyl transfer from S-adenosyl-L-methionine to the 2'-OH of the wobble nucleotide. The sequence is that of tRNA (cytidine(34)-2'-O)-methyltransferase from Beijerinckia indica subsp. indica (strain ATCC 9039 / DSM 1715 / NCIMB 8712).